A 2948-amino-acid polypeptide reads, in one-letter code: Transforming acidic coiled-coil-containing protein 2 (2948 aa).

A compositionally biased stretch (polar residues) spans 1–30; sequence MGNENSTSDNQRTLSAQTPRSAQPPGNSQN. Disordered regions lie at residues 1 to 304, 314 to 333, 392 to 453, 465 to 785, 825 to 964, 985 to 1050, 1062 to 1154, 1243 to 1274, 1296 to 1400, 1427 to 1463, 1493 to 1661, 1675 to 1705, 1741 to 1878, 1907 to 2035, and 2052 to 2460; these read MGNE…TDDL, RSNS…QESC, AAGG…MPVS, LVGL…PQGE, SSEK…VSPP, CTGQ…QPDS, ALAP…GEAT, AAQR…VGEP, QPGA…EQIA, PGEK…VTLL, ASDK…GERR, LGNQ…AGEA, VLPG…ESPT, HAGL…SSGT, and LEPR…ETPP. Positions 174 to 184 are enriched in basic and acidic residues; it reads GRERQPKEEGQ. Phosphoserine occurs at positions 197, 201, and 269. A Phosphothreonine modification is found at Val-325. Position 493 is a phosphoserine (Ser-493). The span at 496 to 507 shows a compositional bias: basic and acidic residues; the sequence is ERGEHLNTEQSH. Ser-561, Ser-571, and Ser-575 each carry phosphoserine. A compositionally biased stretch (basic and acidic residues) spans 604-629; that stretch reads SKRDPEVGKDELSKPSSDAESRDHPS. Ser-758 is subject to Phosphoserine. A compositionally biased stretch (low complexity) spans 911 to 926; sequence SDTPTSSPTDMVWESS. Ser-962 bears the Phosphoserine mark. Over residues 985–996 the composition is skewed to polar residues; that stretch reads CTGQGPNKSQQA. Ser-1025 is subject to Phosphoserine. A phosphoserine mark is found at Ser-1267 and Ser-1313. Positions 1348–1357 are enriched in low complexity; that stretch reads ATAPGAGAKA. Over residues 1383–1400 the composition is skewed to polar residues; it reads DPKQGTSGGVDTSSEQIA. A Phosphoserine modification is found at Ser-1562. Composition is skewed to basic and acidic residues over residues 1801 to 1823 and 1834 to 1854; these read DETH…RESP and PKKD…RGAE. Positions 1862 to 1873 are enriched in low complexity; the sequence is ADDIIQPAAPAD. Basic and acidic residues predominate over residues 1939–1948; that stretch reads PAKDLSRSSD. The segment covering 1963–1976 has biased composition (pro residues); the sequence is KAPPAPPPPPPEVI. The residue at position 2072 (Ser-2072) is a Phosphoserine. Over residues 2074-2102 the composition is skewed to polar residues; the sequence is DSVPISKSTLSRSLSLQASDFDGASSSGN. Over residues 2114-2124 the composition is skewed to low complexity; the sequence is STGSSSASSTL. Over residues 2125-2141 the composition is skewed to basic residues; that stretch reads KRTKKPRPPSLKKKQTT. Phosphoserine occurs at positions 2161 and 2226. At Thr-2246 the chain carries Phosphothreonine. Ser-2256 is subject to Phosphoserine. Over residues 2265–2275 the composition is skewed to basic and acidic residues; the sequence is LEFDYSEDKSS. A compositionally biased stretch (basic residues) spans 2288–2305; the sequence is KIGKKPVAKMPLRRPKMK. The 89-residue stretch at 2315-2403 folds into the SPAZ domain; that stretch reads PASPPRSPAE…SPASFEIPAS (89 aa). Phosphoserine occurs at positions 2317, 2321, 2359, 2389, 2392, 2394, and 2403. Over residues 2348 to 2368 the composition is skewed to polar residues; that stretch reads NPFSSTSKMQESPKLPQQSYN. A compositionally biased stretch (low complexity) spans 2382-2395; that stretch reads KTSSKTPSSPSKSP. Phosphothreonine occurs at positions 2430, 2451, 2455, and 2458. Ser-2512 and Ser-2534 each carry phosphoserine. Thr-2553 carries the phosphothreonine modification. Positions 2555–2577 are disordered; the sequence is QESPVKSSPVRMSESPTPCSGSS. 2 positions are modified to phosphoserine: Ser-2557 and Ser-2569. Polar residues predominate over residues 2568-2577; sequence ESPTPCSGSS. A Phosphothreonine modification is found at Thr-2625. 2 coiled-coil regions span residues 2675–2703 and 2746–2947; these read AQKL…LASR and DLDS…KMGK.

This sequence belongs to the TACC family. As to quaternary structure, interacts with CCDC100/CEP120. Interacts with microtubules. Interacts with YEATS4, GCN5L2 and PCAF. Phosphorylated by TTK; which is required for localization in centrosome. As to expression, strongly expressed in heart, skeletal muscle, brain, prostate, thyroid and trachea.

It localises to the cytoplasm. The protein resides in the nucleus. It is found in the cytoskeleton. Its subcellular location is the microtubule organizing center. The protein localises to the centrosome. Functionally, plays a role in the microtubule-dependent coupling of the nucleus and the centrosome. Involved in the processes that regulate centrosome-mediated interkinetic nuclear migration (INM) of neural progenitors. May play a role in organizing centrosomal microtubules. May act as a tumor suppressor protein. May represent a tumor progression marker. This Homo sapiens (Human) protein is Transforming acidic coiled-coil-containing protein 2 (TACC2).